Consider the following 124-residue polypeptide: Small ribosomal subunit protein bS16 (124 aa).

The disordered stretch occupies residues 80–124 (AGLAKRPARNNPTKAQPGKKAQERAAEAKQKAEEAAAAASEAAAE). A compositionally biased stretch (basic and acidic residues) spans 99-113 (KAQERAAEAKQKAEE). Residues 114 to 124 (AAAAASEAAAE) show a composition bias toward low complexity.

The protein belongs to the bacterial ribosomal protein bS16 family.

In Rhizobium meliloti (strain 1021) (Ensifer meliloti), this protein is Small ribosomal subunit protein bS16.